Here is a 592-residue protein sequence, read N- to C-terminus: Arginine--tRNA ligase (592 aa).

The 'HIGH' region signature appears at Ala-128–His-138.

It belongs to the class-I aminoacyl-tRNA synthetase family. In terms of assembly, monomer.

Its subcellular location is the cytoplasm. The enzyme catalyses tRNA(Arg) + L-arginine + ATP = L-arginyl-tRNA(Arg) + AMP + diphosphate. The protein is Arginine--tRNA ligase of Hydrogenovibrio crunogenus (strain DSM 25203 / XCL-2) (Thiomicrospira crunogena).